The primary structure comprises 240 residues: Myomodulin neuropeptides 2 (240 aa).

A signal peptide spans 1-23; that stretch reads MWKILETCSCFLVVAVLSGLGKA. The disordered stretch occupies residues 23 to 44; it reads AQPESFSGSAVTDDSTSGANKR. Residues 24–44 constitute a propeptide that is removed on maturation; sequence QPESFSGSAVTDDSTSGANKR. Over residues 26–41 the composition is skewed to polar residues; sequence ESFSGSAVTDDSTSGA. Leucine 51 and leucine 60 each carry leucine amide. 2 consecutive propeptides (connecting peptide) follow at residues 72-81 and 84-112; these read SGHQVPMLRA and GSPDTSGRLDANELYAVLSAILDEPRDQS. Alanine 81 carries the post-translational modification Alanine amide. Position 115 is a pyrrolidone carboxylic acid (glutamine 115). At tyrosine 121 the chain carries Tyrosine amide. 10 propeptides (connecting peptide) span residues 124-147, 124-148, 124-149, 124-168, 131-168, 149-168, 150-168, 151-168, 171-190, and 171-199; these read DNNGVARDLLDALASDGESSSNFD, DNNGVARDLLDALASDGESSSNFDL, DNNGVARDLLDALASDGESSSNFDLL, DNNG…GGRY, DLLDALASDGESSSNFDLLSSLNNGPSYFRPAPRGGRY, LSSLNNGPSYFRPAPRGGRY, SSLNNGPSYFRPAPRGGRY, SLNNGPSYFRPAPRGGRY, SLPDAGPADYPSLEDYLVQS, and SLPDAGPADYPSLEDYLVQSRQFARPYSS. Isoleucine 207 carries the isoleucine amide modification. Residues 210 to 219 constitute a propeptide that is removed on maturation; sequence FSGSPRLQAK. A disordered region spans residues 212-240; it reads GSPRLQAKAVPRPRIGRQESQMREAKSAE. Isoleucine 226 carries the isoleucine amide modification. Residues 227–240 constitute a propeptide that is removed on maturation; the sequence is GRQESQMREAKSAE. Residues 227 to 240 are compositionally biased toward basic and acidic residues; sequence GRQESQMREAKSAE.

In terms of tissue distribution, expressed in the pedal-buccal projection neurons in the pedal ganglion.

It is found in the secreted. MMG2-DPs (Myomodulin gene 2-derived peptides) bias egestive feeding programs toward ingestive ones, and modulate accessory radula closer (ARC) muscle contractions. This Aplysia californica (California sea hare) protein is Myomodulin neuropeptides 2 (MMG2).